A 361-amino-acid chain; its full sequence is Ribosomal RNA large subunit methyltransferase M (361 aa).

S-adenosyl-L-methionine-binding positions include S193, 226–229 (CPGG), D245, D265, and D283. The active-site Proton acceptor is K312.

The protein belongs to the class I-like SAM-binding methyltransferase superfamily. RNA methyltransferase RlmE family. RlmM subfamily. In terms of assembly, monomer.

It localises to the cytoplasm. It carries out the reaction cytidine(2498) in 23S rRNA + S-adenosyl-L-methionine = 2'-O-methylcytidine(2498) in 23S rRNA + S-adenosyl-L-homocysteine + H(+). Functionally, catalyzes the 2'-O-methylation at nucleotide C2498 in 23S rRNA. The sequence is that of Ribosomal RNA large subunit methyltransferase M from Histophilus somni (strain 2336) (Haemophilus somnus).